The primary structure comprises 396 residues: MSKDKKNEDKETLEELKELSEWQKRNQEYLKKKAEEEVALAEEKEKERQARMGEESEKSEDKQDQESETDQEDSESAKEESEEKVASSEADKEKEEPESKEKEEQDKKLAKKATKEKPAKAKIPGIHILRAFTILFPSLLLLIVSAYLLSPYATMKDIRVEGTVQTTADDIRQASGIQDSDYTINLLLDKAKYEKQIKSNYWVESAQLVYQFPTKFTIKVKEYDIVAYYISGENHYPILSSGQLETSSVSLNSLPETYLSVLFNDSEQIKVFVSELAQISPELKAAIQKVELAPSKVTSDLIRLTMNDSDEVLVPLSEMSKKLPYYSKIKPQLSEPSVVDMEAGIYSYTVADKLIMEAEEKAKQEAKEAEKKQEEEQKKQEEESNRNQTNQRSSRR.

2 disordered regions span residues 1–23 (MSKD…SEWQ) and 37–116 (EVAL…ATKE). Over 1–130 (MSKDKKNEDK…AKIPGIHILR (130 aa)) the chain is Cytoplasmic. 2 stretches are compositionally biased toward basic and acidic residues: residues 37–65 (EVAL…KQDQ) and 75–116 (ESAK…ATKE). A helical membrane pass occupies residues 131 to 151 (AFTILFPSLLLLIVSAYLLSP). At 152 to 396 (YATMKDIRVE…NQTNQRSSRR (245 aa)) the chain is on the extracellular side. The region spanning 153 to 223 (ATMKDIRVEG…TKFTIKVKEY (71 aa)) is the POTRA domain. Over residues 361-385 (KAKQEAKEAEKKQEEEQKKQEEESN) the composition is skewed to basic and acidic residues. A disordered region spans residues 361 to 396 (KAKQEAKEAEKKQEEEQKKQEEESNRNQTNQRSSRR). Positions 386–396 (RNQTNQRSSRR) are enriched in low complexity.

It belongs to the FtsQ/DivIB family. DivIB subfamily.

The protein localises to the cell membrane. Functionally, cell division protein that may be involved in stabilizing or promoting the assembly of the division complex. The protein is Cell division protein DivIB of Streptococcus pneumoniae (strain ATCC BAA-255 / R6).